The primary structure comprises 572 residues: Phosphoenolpyruvate-protein phosphotransferase (572 aa).

Catalysis depends on histidine 191, which acts as the Tele-phosphohistidine intermediate. Phosphoenolpyruvate-binding residues include arginine 298 and arginine 334. 2 residues coordinate Mg(2+): glutamate 433 and aspartate 457. Phosphoenolpyruvate is bound by residues 456 to 457 and arginine 467; that span reads ND. Cysteine 504 serves as the catalytic Proton donor.

It belongs to the PEP-utilizing enzyme family. In terms of assembly, homodimer. The cofactor is Mg(2+).

Its subcellular location is the cytoplasm. The enzyme catalyses L-histidyl-[protein] + phosphoenolpyruvate = N(pros)-phospho-L-histidyl-[protein] + pyruvate. In terms of biological role, general (non sugar-specific) component of the phosphoenolpyruvate-dependent sugar phosphotransferase system (sugar PTS). This major carbohydrate active-transport system catalyzes the phosphorylation of incoming sugar substrates concomitantly with their translocation across the cell membrane. Enzyme I transfers the phosphoryl group from phosphoenolpyruvate (PEP) to the phosphoryl carrier protein (HPr). In Staphylococcus aureus (strain Mu50 / ATCC 700699), this protein is Phosphoenolpyruvate-protein phosphotransferase (ptsI).